A 61-amino-acid chain; its full sequence is uncharacterized protein (61 aa).

This is an uncharacterized protein from Escherichia coli (Bacteriophage T4).